Here is a 279-residue protein sequence, read N- to C-terminus: Energy-coupling factor transporter ATP-binding protein EcfA1 (279 aa).

The ABC transporter domain maps to Ile5 to Asp240. Gly40 to Ser47 is an ATP binding site.

Belongs to the ABC transporter superfamily. Energy-coupling factor EcfA family. Forms a stable energy-coupling factor (ECF) transporter complex composed of 2 membrane-embedded substrate-binding proteins (S component), 2 ATP-binding proteins (A component) and 2 transmembrane proteins (T component).

It localises to the cell membrane. Functionally, ATP-binding (A) component of a common energy-coupling factor (ECF) ABC-transporter complex. Unlike classic ABC transporters this ECF transporter provides the energy necessary to transport a number of different substrates. This Enterococcus faecalis (strain ATCC 700802 / V583) protein is Energy-coupling factor transporter ATP-binding protein EcfA1.